The primary structure comprises 273 residues: Hemin import ATP-binding protein HmuV (273 aa).

The ABC transporter domain maps to 2 to 256 (LTAHHLDVAR…AHIAQCYGFA (255 aa)). Position 34-41 (34-41 (GRNGAGKS)) interacts with ATP.

The protein belongs to the ABC transporter superfamily. Heme (hemin) importer (TC 3.A.1.14.5) family. In terms of assembly, the complex is composed of two ATP-binding proteins (HmuV), two transmembrane proteins (HmuU) and a solute-binding protein (HmuT).

It is found in the cell inner membrane. Its function is as follows. Part of the ABC transporter complex HmuTUV involved in hemin import. Responsible for energy coupling to the transport system. The chain is Hemin import ATP-binding protein HmuV from Burkholderia ambifaria (strain ATCC BAA-244 / DSM 16087 / CCUG 44356 / LMG 19182 / AMMD) (Burkholderia cepacia (strain AMMD)).